We begin with the raw amino-acid sequence, 378 residues long: Chaperone protein DnaJ (378 aa).

Residues 5–70 (DYYEVLSVGR…DKKAAYDQFG (66 aa)) enclose the J domain. A CR-type zinc finger spans residues 133–211 (GLTKELRIPT…CHGEGRVEKS (79 aa)). Zn(2+)-binding residues include Cys146, Cys149, Cys163, Cys166, Cys185, Cys188, Cys199, and Cys202. CXXCXGXG motif repeat units follow at residues 146–153 (CDTCDGSG), 163–170 (CGTCHGQG), 185–192 (CPTCHGRG), and 199–206 (CNSCHGEG).

The protein belongs to the DnaJ family. Homodimer. Zn(2+) serves as cofactor.

The protein resides in the cytoplasm. In terms of biological role, participates actively in the response to hyperosmotic and heat shock by preventing the aggregation of stress-denatured proteins and by disaggregating proteins, also in an autonomous, DnaK-independent fashion. Unfolded proteins bind initially to DnaJ; upon interaction with the DnaJ-bound protein, DnaK hydrolyzes its bound ATP, resulting in the formation of a stable complex. GrpE releases ADP from DnaK; ATP binding to DnaK triggers the release of the substrate protein, thus completing the reaction cycle. Several rounds of ATP-dependent interactions between DnaJ, DnaK and GrpE are required for fully efficient folding. Also involved, together with DnaK and GrpE, in the DNA replication of plasmids through activation of initiation proteins. The polypeptide is Chaperone protein DnaJ (Shewanella woodyi (strain ATCC 51908 / MS32)).